The chain runs to 837 residues: Striatin-interacting protein 1 (837 aa).

N-acetylmethionine is present on methionine 1. Disordered stretches follow at residues 1-67 (MEPA…ESPD) and 333-423 (AASP…KGLP). Pro residues predominate over residues 18–35 (PQPPPPPPPATAQPPPGA). Positions 47-60 (KAREFNRNQRKDSE) are enriched in basic and acidic residues. Phosphoserine occurs at positions 59, 335, and 339. Residues 356–377 (KALIKQDNLDAFNERDPYKADD) show a composition bias toward basic and acidic residues. The segment covering 378 to 391 (SREEEEENDDDSSL) has biased composition (acidic residues). At serine 788 the chain carries Phosphoserine. Residues 796–837 (DNCLQSVLGQRVDLPEDFQMNYDLWLEREVFSKPISWEELLQ) form a required for STRIPAK core complex formation region.

It belongs to the STRIP family. Part of the core of STRIPAK complexes composed of PP2A catalytic and scaffolding subunits, the striatins (PP2A regulatory subunits), the striatin-associated proteins MOB4, STRIP1 and STRIP2, PDCD10 and members of the STE20 kinases, such as STK24 and STK26. The STRIPAK complex can be extended by adapter proteins such as SLMAP:SIKE1, CTTNBP2 or CTTNBP2NL. Interacts with CDC42BPB. Interacts with CTTNBP2NL.

It is found in the cytoplasm. Plays a role in the regulation of cell morphology and cytoskeletal organization. Required in the cortical actin filament dynamics and cell shape. Part of the striatin-interacting phosphatase and kinase (STRIPAK) complexes. STRIPAK complexes have critical roles in protein (de)phosphorylation and are regulators of multiple signaling pathways including Hippo, MAPK, nuclear receptor and cytoskeleton remodeling. Different types of STRIPAK complexes are involved in a variety of biological processes such as cell growth, differentiation, apoptosis, metabolism and immune regulation. This Mus musculus (Mouse) protein is Striatin-interacting protein 1 (Strip1).